A 272-amino-acid chain; its full sequence is Type III pantothenate kinase (272 aa).

6–13 (DVRNTHTV) provides a ligand contact to ATP. 109–112 (GADR) provides a ligand contact to substrate. D111 (proton acceptor) is an active-site residue. D131 is a K(+) binding site. ATP is bound at residue S134. T186 lines the substrate pocket.

Belongs to the type III pantothenate kinase family. Homodimer. NH4(+) serves as cofactor. Requires K(+) as cofactor.

Its subcellular location is the cytoplasm. It catalyses the reaction (R)-pantothenate + ATP = (R)-4'-phosphopantothenate + ADP + H(+). Its pathway is cofactor biosynthesis; coenzyme A biosynthesis; CoA from (R)-pantothenate: step 1/5. Catalyzes the phosphorylation of pantothenate (Pan), the first step in CoA biosynthesis. This chain is Type III pantothenate kinase, found in Mycobacterium ulcerans (strain Agy99).